The following is an 83-amino-acid chain: Exodeoxyribonuclease 7 small subunit (83 aa).

It belongs to the XseB family. As to quaternary structure, heterooligomer composed of large and small subunits.

Its subcellular location is the cytoplasm. It carries out the reaction Exonucleolytic cleavage in either 5'- to 3'- or 3'- to 5'-direction to yield nucleoside 5'-phosphates.. Bidirectionally degrades single-stranded DNA into large acid-insoluble oligonucleotides, which are then degraded further into small acid-soluble oligonucleotides. The chain is Exodeoxyribonuclease 7 small subunit from Rhodopseudomonas palustris (strain ATCC BAA-98 / CGA009).